A 640-amino-acid chain; its full sequence is Probable Ufm1-specific protease (640 aa).

Catalysis depends on residues Cys467, Asp591, and His593.

This sequence belongs to the peptidase C78 family.

In terms of biological role, thiol protease which recognizes and hydrolyzes the peptide bond at the C-terminal Gly of ufm-1, a ubiquitin-like modifier protein bound to a number of target proteins. The sequence is that of Probable Ufm1-specific protease from Oryza sativa subsp. japonica (Rice).